The following is a 237-amino-acid chain: Methylosome subunit pICln (237 aa).

Position 2 is an N-acetylserine (Ser-2). 6 positions are modified to phosphoserine: Ser-102, Ser-144, Ser-193, Ser-195, Ser-198, and Ser-210. A disordered region spans residues 135 to 159; the sequence is LHPDPEDEDSDDYDGEEYDVEAHEQ. A compositionally biased stretch (acidic residues) spans 139–153; the sequence is PEDEDSDDYDGEEYD. At Thr-223 the chain carries Phosphothreonine.

The protein belongs to the pICln (TC 1.A.47) family. Component of the methylosome, a 20S complex containing at least PRMT5/SKB1, WDR77/MEP50 and CLNS1A/pICln. May mediate SNRPD1 and SNRPD3 methylation. Forms a 6S pICln-Sm complex composed of CLNS1A/pICln, SNRPD1, SNRPD2, SNRPE, SNRPF and SNRPG; ring-like structure where CLNS1A/pICln mimics additional Sm proteins and which is unable to assemble into the core snRNP. Interacts with LSM10 and LSM11.

The protein localises to the cytoplasm. Its subcellular location is the cytosol. The protein resides in the nucleus. It localises to the cytoskeleton. In terms of biological role, involved in both the assembly of spliceosomal snRNPs and the methylation of Sm proteins. Chaperone that regulates the assembly of spliceosomal U1, U2, U4 and U5 small nuclear ribonucleoproteins (snRNPs), the building blocks of the spliceosome, and thereby plays an important role in the splicing of cellular pre-mRNAs. Most spliceosomal snRNPs contain a common set of Sm proteins SNRPB, SNRPD1, SNRPD2, SNRPD3, SNRPE, SNRPF and SNRPG that assemble in a heptameric protein ring on the Sm site of the small nuclear RNA to form the core snRNP (Sm core). In the cytosol, the Sm proteins SNRPD1, SNRPD2, SNRPE, SNRPF and SNRPG are trapped in an inactive 6S pICln-Sm complex by the chaperone CLNS1A that controls the assembly of the core snRNP. Dissociation by the SMN complex of CLNS1A from the trapped Sm proteins and their transfer to an SMN-Sm complex triggers the assembly of core snRNPs and their transport to the nucleus. This chain is Methylosome subunit pICln (CLNS1A), found in Homo sapiens (Human).